The primary structure comprises 412 residues: Type II methyltransferase M.Sau3AI (412 aa).

The SAM-dependent MTase C5-type domain maps to 4–402; the sequence is IKVVELFAGV…NQIEKIDSIT (399 aa). The active site involves Cys-85.

The protein belongs to the class I-like SAM-binding methyltransferase superfamily. C5-methyltransferase family.

It carries out the reaction a 2'-deoxycytidine in DNA + S-adenosyl-L-methionine = a 5-methyl-2'-deoxycytidine in DNA + S-adenosyl-L-homocysteine + H(+). In terms of biological role, a methylase that recognizes the double-stranded sequence 5'-GATC-3', methylates C-4 on both strands and protects the DNA from cleavage by the Sau3AI endonuclease. This is Type II methyltransferase M.Sau3AI (sau3AIM) from Staphylococcus aureus.